Consider the following 390-residue polypeptide: Cyclic amide hydrolase (390 aa).

The tract at residues M1–D118 is RU A. Substrate contacts are provided by residues R66 and S97–G98. The RU B stretch occupies residues G127–A268. K177 is a catalytic residue. Substrate contacts are provided by residues N213, S251–S252, K346, and S365–G366. The active-site Nucleophile is S251. The RU C stretch occupies residues L274–A390.

This sequence belongs to the cyclic amide hydrolase (CyAH) family. In terms of assembly, homotetramer; disulfide-linked. The disulfide forms between 2 monomers in the tetramer, such that each tetramer contains 2 sets of vicinal disulfides.

In terms of biological role, cyclic amide hydrolase of unknown substrate specificity. Catalyzes the hydrolytic ring-opening of a cyclic amide. Does not act on cyanuric acid nor barbituric acid. In Pseudofrankia inefficax (strain DSM 45817 / CECT 9037 / DDB 130130 / EuI1c) (Frankia inefficax), this protein is Cyclic amide hydrolase.